We begin with the raw amino-acid sequence, 224 residues long: Vesicle transport through interaction with t-SNAREs homolog 1A (224 aa).

Residues M1–R199 lie on the Cytoplasmic side of the membrane. Coiled coils occupy residues P31–R92 and D106–S185. A helical; Anchor for type IV membrane protein membrane pass occupies residues I200–F220. Over V221–H224 the chain is Vesicular.

It belongs to the VTI1 family. As to quaternary structure, interacts with distinct SNARE complexes that contain either STX5 or STX6. Interacts with NAPA and, to a lesser extent, with NAPG. Identified in a complex containing STX6, STX12, VAMP4 and VTI1A. As to expression, specifically expressed in the neuronal tissues cerebellum, cortex and hippocampus. Isoform 1/VTI1A is expressed in the same neuronal tissues but also in lung, liver, kidney and spleen.

Its subcellular location is the membrane. The protein localises to the cytoplasmic vesicle. It is found in the secretory vesicle. The protein resides in the synaptic vesicle membrane. It localises to the clathrin-coated vesicle membrane. Its subcellular location is the golgi apparatus membrane. In terms of biological role, V-SNARE that mediates vesicle transport pathways through interactions with t-SNAREs on the target membrane. These interactions are proposed to mediate aspects of the specificity of vesicle trafficking and to promote fusion of the lipid bilayers. Involved in vesicular transport from the late endosomes to the trans-Golgi network. Along with VAMP7, involved in an non-conventional RAB1-dependent traffic route to the cell surface used by KCNIP1 and KCND2. May be concerned with increased secretion of cytokines associated with cellular senescence. In Rattus norvegicus (Rat), this protein is Vesicle transport through interaction with t-SNAREs homolog 1A (Vti1a).